A 398-amino-acid chain; its full sequence is Na(+)/H(+) antiporter NhaA (398 aa).

The next 11 helical transmembrane spans lie at 14–34 (AAGV…NWSV), 60–80 (LLLW…GLEV), 96–116 (MLPL…FLLF), 125–145 (VGWA…LTLL), 155–175 (VFLL…IALF), 179–199 (QIFW…AYLN), 214–234 (IVLW…GVIV), 263–283 (FLII…GIVL), 292–312 (LGIA…LSWL), 330–350 (IVAV…ITLL), and 362–382 (YAKL…YLAL).

The protein belongs to the NhaA Na(+)/H(+) (TC 2.A.33) antiporter family.

It is found in the cell inner membrane. It catalyses the reaction Na(+)(in) + 2 H(+)(out) = Na(+)(out) + 2 H(+)(in). Functionally, na(+)/H(+) antiporter that extrudes sodium in exchange for external protons. In Pectobacterium carotovorum subsp. carotovorum (strain PC1), this protein is Na(+)/H(+) antiporter NhaA.